The sequence spans 398 residues: MSASQIPNLNTLRRGGGRGRLRGRGGFETGAPSEDRHGSRGLAAQDRVVQGTDNDASVSRLSAVEIGYLEDPFAKVLTPPGSGTRRLPIINRGTYVRTTAIDRLVARFLEGPSQTKKQIISLGAGSDTRVFRLLSSRSSASSSDLIYHEIDFSANTAAKIKFIRAAPLLQRTLGLGSAQNVAIPDSGDALHSPTYHLHPVDLRTLAASGSATTSRSPSSPNPAEKDQPPCPLQGVDPTLPTLLISECCLVYLSPREAADVVDYFTKTLFPASVPLGLIIYEPIRPDDAFGRTMVANLATRGIQLQTLHEYASLEAQRRRLREHGLHSGQAAADIDFIWERWVSEAEKERVARLEMLDEVEEWQLLARHYCVAWGWTSGAGEDTTVFDGWKEIDGQTGD.

A compositionally biased stretch (polar residues) spans methionine 1–threonine 11. The disordered stretch occupies residues methionine 1–asparagine 54. S-adenosyl-L-methionine-binding positions include arginine 97, glycine 123, aspartate 151, and aspartate 201–leucine 202. A compositionally biased stretch (low complexity) spans serine 208–serine 218. Positions serine 208 to leucine 232 are disordered. Glutamate 246 contacts S-adenosyl-L-methionine.

Belongs to the methyltransferase superfamily. LCMT family.

The catalysed reaction is [phosphatase 2A protein]-C-terminal L-leucine + S-adenosyl-L-methionine = [phosphatase 2A protein]-C-terminal L-leucine methyl ester + S-adenosyl-L-homocysteine. In terms of biological role, methylates the carboxyl group of the C-terminal leucine residue of protein phosphatase 2A catalytic subunits to form alpha-leucine ester residues. This chain is Leucine carboxyl methyltransferase 1 (ppm1), found in Aspergillus fumigatus (strain ATCC MYA-4609 / CBS 101355 / FGSC A1100 / Af293) (Neosartorya fumigata).